We begin with the raw amino-acid sequence, 283 residues long: Pantothenate synthetase (283 aa).

34-41 is a binding site for ATP; sequence MGALHDGH. His41 functions as the Proton donor in the catalytic mechanism. Gln65 lines the (R)-pantoate pocket. Gln65 contacts beta-alanine. ATP is bound at residue 152 to 155; sequence GSKD. Position 158 (Gln158) interacts with (R)-pantoate. ATP contacts are provided by residues Val181 and 189–192; that span reads MSSR.

This sequence belongs to the pantothenate synthetase family. In terms of assembly, homodimer.

The protein localises to the cytoplasm. The enzyme catalyses (R)-pantoate + beta-alanine + ATP = (R)-pantothenate + AMP + diphosphate + H(+). It functions in the pathway cofactor biosynthesis; (R)-pantothenate biosynthesis; (R)-pantothenate from (R)-pantoate and beta-alanine: step 1/1. In terms of biological role, catalyzes the condensation of pantoate with beta-alanine in an ATP-dependent reaction via a pantoyl-adenylate intermediate. The polypeptide is Pantothenate synthetase (Rhodopseudomonas palustris (strain ATCC BAA-98 / CGA009)).